The sequence spans 280 residues: 2-dehydro-3-deoxyphosphooctonate aldolase (280 aa).

The protein belongs to the KdsA family.

The protein localises to the cytoplasm. It catalyses the reaction D-arabinose 5-phosphate + phosphoenolpyruvate + H2O = 3-deoxy-alpha-D-manno-2-octulosonate-8-phosphate + phosphate. The protein operates within carbohydrate biosynthesis; 3-deoxy-D-manno-octulosonate biosynthesis; 3-deoxy-D-manno-octulosonate from D-ribulose 5-phosphate: step 2/3. It participates in bacterial outer membrane biogenesis; lipopolysaccharide biosynthesis. This chain is 2-dehydro-3-deoxyphosphooctonate aldolase, found in Thioalkalivibrio sulfidiphilus (strain HL-EbGR7).